The following is a 185-amino-acid chain: Alkyl hydroperoxide reductase AhpD (185 aa).

Cys-132 acts as the Proton donor in catalysis. A disulfide bridge connects residues Cys-132 and Cys-135. Cys-135 functions as the Cysteine sulfenic acid (-SOH) intermediate in the catalytic mechanism.

The protein belongs to the AhpD family.

The enzyme catalyses N(6)-[(R)-dihydrolipoyl]-L-lysyl-[lipoyl-carrier protein] + a hydroperoxide = N(6)-[(R)-lipoyl]-L-lysyl-[lipoyl-carrier protein] + an alcohol + H2O. In terms of biological role, antioxidant protein with alkyl hydroperoxidase activity. Required for the reduction of the AhpC active site cysteine residues and for the regeneration of the AhpC enzyme activity. The protein is Alkyl hydroperoxide reductase AhpD of Anaeromyxobacter sp. (strain Fw109-5).